Consider the following 3603-residue polypeptide: Plipastatin synthase subunit D (3603 aa).

A condensation 1 region spans residues 7-306 (IQDIYPLSYM…NTMPVRVQGA (300 aa)). Residues 7–1043 (IQDIYPLSYM…ALIIREAEQN (1037 aa)) are domain 1 (proline-activating). The segment at 490–889 (TYRELNKAAN…NHPDISEAAI (400 aa)) is adenylation 1. The Carrier 1 domain occupies 966–1041 (APRNLLEAKL…GLALIIREAE (76 aa)). Serine 1001 carries the O-(pantetheine 4'-phosphoryl)serine modification. The segment at 1053-1334 (KRDTYPVSSA…NTLALRTRPA (282 aa)) is condensation 2. A domain 2 (glutamine-activating) region spans residues 1053–2069 (KRDTYPVSSA…TVEGLATVIR (1017 aa)). Residues 1521–1924 (TYKELNEQAN…SIEGVREAAV (404 aa)) are adenylation 2. Residues 1997 to 2072 (APRNVTEMKL…GLATVIREGT (76 aa)) enclose the Carrier 2 domain. Serine 2032 carries the O-(pantetheine 4'-phosphoryl)serine modification. Positions 2084–2374 (KQETYPVSSA…NTLALRTRPE (291 aa)) are condensation 3. The interval 2084 to 3596 (KQETYPVSSA…ELTEDALQEI (1513 aa)) is domain 3 (proline-activating). The interval 2560–2956 (TYQELDEWSN…CIKGVKDAAV (397 aa)) is adenylation 3. The 75-residue stretch at 3034-3108 (PPSSKMEQIL…ELAAYIRDSD (75 aa)) folds into the Carrier 3 domain. The residue at position 3069 (serine 3069) is an O-(pantetheine 4'-phosphoryl)serine. Residues 3116 to 3596 (VEGDVQWSPV…ELTEDALQEI (481 aa)) are epimerization.

This sequence belongs to the ATP-dependent AMP-binding enzyme family. The cofactor is pantetheine 4'-phosphate.

Its function is as follows. This protein is a multifunctional enzyme, able to activate and polymerize the amino acids Pro, Gln and Tyr as part of the biosynthesis of the lipopeptide antibiotic plipastatin. The Tyr residue is further epimerized to the D-isomer form. The activation sites for these amino acids consist of individual domains. The protein is Plipastatin synthase subunit D (ppsD) of Bacillus subtilis (strain 168).